A 390-amino-acid chain; its full sequence is Bibenzyl synthase (390 aa).

The active site involves Cys164.

This sequence belongs to the thiolase-like superfamily. Chalcone/stilbene synthases family.

The catalysed reaction is 3-(3-hydroxyphenyl)-propanoyl-CoA + 3 malonyl-CoA + 3 H(+) = 3,3',5-trihydroxybibenzyl + 4 CO2 + 4 CoA. The chain is Bibenzyl synthase (BIBSY212) from Phalaenopsis sp. (Moth orchid).